The following is a 470-amino-acid chain: Meiosis-specific with OB domain-containing protein (470 aa).

The segment at residues 167-272 (IINVLAAVRS…EANILLNFIR (106 aa)) is a DNA-binding region (OB).

The protein belongs to the MEIOB family. As to quaternary structure, component of a multiprotein complex with RPA2 and SPATA22. Interacts with SPATA22. Interacts with the complex BRME1:HSF2BP:BRCA2.

It localises to the cytoplasm. It is found in the nucleus. The protein localises to the chromosome. Functionally, single-stranded DNA-binding protein required for homologous recombination in meiosis I. Required for double strand breaks (DSBs) repair and crossover formation and promotion of faithful and complete synapsis. Not required for the initial loading of recombinases but required to maintain a proper number of RAD51 and DMC1 foci after the zygotene stage. May act by ensuring the stabilization of recombinases, which is required for successful homology search and meiotic recombination. Displays Single-stranded DNA 3'-5' exonuclease activity in vitro. The sequence is that of Meiosis-specific with OB domain-containing protein from Rattus norvegicus (Rat).